A 532-amino-acid polypeptide reads, in one-letter code: 56 kDa type-specific antigen (532 aa).

The signal sequence occupies residues 1 to 22 (MKKIMLIASAMSALSLPFSASA). A helical membrane pass occupies residues 67 to 87 (LTTGLPFGGTLAAGMTIAPGF). 2 disordered regions span residues 113–140 (KGEI…PQPT) and 400–426 (QQEE…SKEG). Residues 403-413 (EDAKNQGKGDC) are compositionally biased toward basic and acidic residues. A helical membrane pass occupies residues 480–500 (TGMVASGALGVAINAAEGVCV).

Its subcellular location is the cell membrane. Functionally, may be an adherent factor for rickettsial adsorption to the host-cell surface and a determinant of virulence of individual rickettsial strain. It is the major outer membrane protein. This is 56 kDa type-specific antigen from Orientia tsutsugamushi (Rickettsia tsutsugamushi).